Here is a 554-residue protein sequence, read N- to C-terminus: Gamma-aminobutyric acid receptor subunit alpha-4 (554 aa).

Positions 1–35 (MVSAKKVPAIALSAGVSFALLRFLCLAVCLNESPG) are cleaved as a signal peptide. Residues 36–259 (QNQKEEKLCT…FHLRRKMGYF (224 aa)) lie on the Extracellular side of the membrane. N-linked (GlcNAc...) asparagine glycosylation is present at asparagine 47. A 4-aminobutanoate-binding site is contributed by arginine 100. N-linked (GlcNAc...) asparagine glycosylation is found at asparagine 144 and asparagine 157. Residue threonine 163 coordinates 4-aminobutanoate. Cysteine 172 and cysteine 186 form a disulfide bridge. Residues 260–280 (MIQTYIPCIMTVILSQVSFWI) traverse the membrane as a helical segment. Over 281–284 (NKES) the chain is Cytoplasmic. Residues 285–305 (VPARTVFGITTVLTMTTLSIS) traverse the membrane as a helical segment. The Extracellular portion of the chain corresponds to 306–318 (ARHSLPKVSYATA). The chain crosses the membrane as a helical span at residues 319-341 (MDWFIAVCFAFVFSALIEFAAVN). The Cytoplasmic portion of the chain corresponds to 342–517 (YFTNIQMEKA…PPPSGSGTSK (176 aa)). 4 disordered regions span residues 350–381 (KAKR…QNTN), 397–435 (ESDV…SPNP), 452–471 (PSAS…ASVG), and 495–515 (ATGK…GSGT). The span at 410 to 422 (SSKSSTVVQESSK) shows a compositional bias: low complexity. A compositionally biased stretch (pro residues) spans 502–511 (TPPPSAPPPS). A helical membrane pass occupies residues 518-540 (IDKYARILFPVTFGAFNMVYWVV). The Extracellular portion of the chain corresponds to 541–554 (YLSKDTMEKSESLM).

This sequence belongs to the ligand-gated ion channel (TC 1.A.9) family. Gamma-aminobutyric acid receptor (TC 1.A.9.5) subfamily. GABRA4 sub-subfamily. As to quaternary structure, heteropentamer, formed by a combination of alpha (GABRA1-6), beta (GABRB1-3), gamma (GABRG1-3), delta (GABRD), epsilon (GABRE), rho (GABRR1-3), pi (GABRP) and theta (GABRQ) chains, each subunit exhibiting distinct physiological and pharmacological properties. Expressed in the brain.

The protein localises to the cell membrane. It localises to the postsynaptic cell membrane. It catalyses the reaction chloride(in) = chloride(out). With respect to regulation, potentiated by histamine. Its function is as follows. Alpha subunit of the heteropentameric ligand-gated chloride channel gated by gamma-aminobutyric acid (GABA), a major inhibitory neurotransmitter in the brain. GABA-gated chloride channels, also named GABA(A) receptors (GABAAR), consist of five subunits arranged around a central pore and contain GABA active binding site(s) located at the alpha and beta subunit interface(s). When activated by GABA, GABAARs selectively allow the flow of chloride anions across the cell membrane down their electrochemical gradient. GABAARs containing alpha-4 are predominantly extrasynaptic, contributing to tonic inhibition in dentate granule cells and thalamic relay neurons. Extrasynaptic alpha-4-containing GABAARs control levels of excitability and network activity. GABAAR containing alpha-4-beta-3-delta subunits can simultaneously bind GABA and histamine where histamine binds at the interface of two neighboring beta subunits, which may be involved in the regulation of sleep and wakefulness. This chain is Gamma-aminobutyric acid receptor subunit alpha-4, found in Homo sapiens (Human).